The following is a 135-amino-acid chain: Interleukin-4 (135 aa).

The signal sequence occupies residues 1–24 (MGLTSQLIPVLVCLLACTSHFVHG). Intrachain disulfides connect cysteine 27/cysteine 135, cysteine 48/cysteine 85, and cysteine 70/cysteine 105. Residues asparagine 62 and asparagine 96 are each glycosylated (N-linked (GlcNAc...) asparagine).

It belongs to the IL-4/IL-13 family.

Its subcellular location is the secreted. In terms of biological role, participates in at least several B-cell activation processes as well as of other cell types. It is a costimulator of DNA-synthesis. It induces the expression of class II MHC molecules on resting B-cells. It enhances both secretion and cell surface expression of IgE and IgG1. It also regulates the expression of the low affinity Fc receptor for IgE (CD23) on both lymphocytes and monocytes. Positively regulates IL31RA expression in macrophages. Stimulates autophagy in dendritic cells by interfering with mTORC1 signaling and through the induction of RUFY4. This Cervus elaphus (Red deer) protein is Interleukin-4 (IL4).